The following is a 742-amino-acid chain: Photosystem I P700 chlorophyll a apoprotein A2 (742 aa).

8 helical membrane passes run 46-69, 135-158, 175-199, 273-291, 336-359, 375-401, 423-445, and 525-543; these read LFST…FHIA, LFQA…LHLQ, LNHH…HVAI, IAHH…GHMY, LHFQ…QHMG, SALY…IFFV, ALIS…IYVH, and FLVH…LILI. [4Fe-4S] cluster is bound by residues C567 and C576. Transmembrane regions (helical) follow at residues 583–604 and 651–673; these read AMYL…YWHW and LSPW…MFLI. Divinyl chlorophyll a-binding residues include H662, M670, and Y678. W679 provides a ligand contact to phylloquinone. The helical transmembrane segment at 715-735 threads the bilayer; it reads LVGLAHFTIGNILTFGAFVIA.

It belongs to the PsaA/PsaB family. The PsaA/B heterodimer binds the P700 divinyl chlorophyll special pair and subsequent electron acceptors. PSI consists of a core antenna complex that captures photons, and an electron transfer chain that converts photonic excitation into a charge separation. The cyanobacterial PSI reaction center is composed of one copy each of PsaA,B,C,D,E,F,I,J,K,L,M and X, and forms trimeric complexes. The cofactor is PSI electron transfer chain: 5 divinyl chlorophyll a, 1 divinyl chlorophyll a', 2 phylloquinones and 3 4Fe-4S clusters. PSI core antenna: 90 divinyl chlorophyll a, 22 carotenoids, 3 phospholipids and 1 galactolipid. P700 is a divinyl chlorophyll a/divinyl chlorophyll a' dimer, A0 is one or more divinyl chlorophyll a, A1 is one or both phylloquinones and FX is a shared 4Fe-4S iron-sulfur center..

The protein resides in the cellular thylakoid membrane. The catalysed reaction is reduced [plastocyanin] + hnu + oxidized [2Fe-2S]-[ferredoxin] = oxidized [plastocyanin] + reduced [2Fe-2S]-[ferredoxin]. Functionally, psaA and PsaB bind P700, the primary electron donor of photosystem I (PSI), as well as the electron acceptors A0, A1 and FX. PSI is a plastocyanin/cytochrome c6-ferredoxin oxidoreductase, converting photonic excitation into a charge separation, which transfers an electron from the donor P700 chlorophyll pair to the spectroscopically characterized acceptors A0, A1, FX, FA and FB in turn. Oxidized P700 is reduced on the lumenal side of the thylakoid membrane by plastocyanin or cytochrome c6. The polypeptide is Photosystem I P700 chlorophyll a apoprotein A2 (Prochlorococcus marinus (strain MIT 9301)).